Here is a 763-residue protein sequence, read N- to C-terminus: Protein translocase subunit SecA 2 (763 aa).

ATP is bound by residues Gln83, 101-105 (GEGKT), and Asp490.

Belongs to the SecA family. Monomer and homodimer. Part of the essential Sec protein translocation apparatus which comprises SecA, SecYEG and auxiliary proteins SecDF. Other proteins may also be involved.

It localises to the cell membrane. It is found in the cytoplasm. It carries out the reaction ATP + H2O + cellular proteinSide 1 = ADP + phosphate + cellular proteinSide 2.. Part of the Sec protein translocase complex. Interacts with the SecYEG preprotein conducting channel. Has a central role in coupling the hydrolysis of ATP to the transfer of proteins into and across the cell membrane, serving as an ATP-driven molecular motor driving the stepwise translocation of polypeptide chains across the membrane. This is Protein translocase subunit SecA 2 from Corynebacterium glutamicum (strain ATCC 13032 / DSM 20300 / JCM 1318 / BCRC 11384 / CCUG 27702 / LMG 3730 / NBRC 12168 / NCIMB 10025 / NRRL B-2784 / 534).